The following is a 326-amino-acid chain: ATP synthase gamma chain (326 aa).

It belongs to the ATPase gamma chain family. F-type ATPases have 2 components, CF(1) - the catalytic core - and CF(0) - the membrane proton channel. CF(1) has five subunits: alpha(3), beta(3), gamma(1), delta(1), epsilon(1). CF(0) has three main subunits: a, b and c.

The protein localises to the cell membrane. Produces ATP from ADP in the presence of a proton gradient across the membrane. The gamma chain is believed to be important in regulating ATPase activity and the flow of protons through the CF(0) complex. The sequence is that of ATP synthase gamma chain from Corynebacterium efficiens (strain DSM 44549 / YS-314 / AJ 12310 / JCM 11189 / NBRC 100395).